The sequence spans 356 residues: DNA polymerase IV (356 aa).

The UmuC domain maps to 6–187 (IIHIDMDYFF…LDIGDFPGVG (182 aa)). Aspartate 10 and aspartate 105 together coordinate Mg(2+). Glutamate 106 is an active-site residue.

The protein belongs to the DNA polymerase type-Y family. In terms of assembly, monomer. Mg(2+) is required as a cofactor.

The protein resides in the cytoplasm. The enzyme catalyses DNA(n) + a 2'-deoxyribonucleoside 5'-triphosphate = DNA(n+1) + diphosphate. Poorly processive, error-prone DNA polymerase involved in untargeted mutagenesis. Copies undamaged DNA at stalled replication forks, which arise in vivo from mismatched or misaligned primer ends. These misaligned primers can be extended by PolIV. Exhibits no 3'-5' exonuclease (proofreading) activity. May be involved in translesional synthesis, in conjunction with the beta clamp from PolIII. In Staphylococcus epidermidis (strain ATCC 12228 / FDA PCI 1200), this protein is DNA polymerase IV.